The chain runs to 336 residues: tRNA N6-adenosine threonylcarbamoyltransferase (336 aa).

Residues histidine 110 and histidine 114 each contribute to the Fe cation site. Substrate-binding positions include 133-137 (LVSGK), aspartate 166, glycine 179, and asparagine 271. Fe cation is bound at residue aspartate 300.

Belongs to the KAE1 / TsaD family. Fe(2+) serves as cofactor.

It is found in the cytoplasm. It carries out the reaction L-threonylcarbamoyladenylate + adenosine(37) in tRNA = N(6)-L-threonylcarbamoyladenosine(37) in tRNA + AMP + H(+). Functionally, required for the formation of a threonylcarbamoyl group on adenosine at position 37 (t(6)A37) in tRNAs that read codons beginning with adenine. Is involved in the transfer of the threonylcarbamoyl moiety of threonylcarbamoyl-AMP (TC-AMP) to the N6 group of A37, together with TsaE and TsaB. TsaD likely plays a direct catalytic role in this reaction. The polypeptide is tRNA N6-adenosine threonylcarbamoyltransferase (Buchnera aphidicola subsp. Acyrthosiphon pisum (strain 5A)).